The chain runs to 99 residues: Sarcosine oxidase subunit delta (99 aa).

Zn(2+) is bound by residues Cys6, Cys9, His59, and Cys63.

It belongs to the SoxD family. Heterotetramer composed of subunits alpha (SoxA), beta (SoxB), gamma (SoxG) and delta (SoxD).

Its subcellular location is the cytoplasm. The enzyme catalyses sarcosine + (6S)-5,6,7,8-tetrahydrofolate + O2 = (6R)-5,10-methylene-5,6,7,8-tetrahydrofolate + glycine + H2O2. It catalyses the reaction sarcosine + O2 + H2O = formaldehyde + glycine + H2O2. Its activity is regulated as follows. Inhibited by Zn(2+), Cu(2+), Cd(2+), Hg(2+), Ag(+), p-chloromercuribenzoate (p-CMB), iodoacetamide, N-ethylmaleimide, CN(-), o-phenanthroline and sodium lauryl sulfate. Functionally, in the presence of tetrahydrofolate, catalyzes the oxidative demethylation of sarcosine to yield glycine, 5,10-methylenetetrahydrofolate and hydrogen peroxide. In the absence of tetrahydrofolate, catalyzes the oxidative demethylation of sarcosine to yield glycine, formaldehyde and hydrogen peroxide. Can also use N-methyl-L-alanine and N-ethyl-L-glycine. Is very specific for oxygen as an acceptor. The protein is Sarcosine oxidase subunit delta of Corynebacterium sp. (strain U-96).